The sequence spans 727 residues: ABC transporter G family member 6 (727 aa).

In terms of domain architecture, ABC transporter spans L68–E333. G126 to S133 is a binding site for ATP. In terms of domain architecture, ABC transmembrane type-2 spans V421 to F631. Helical transmembrane passes span L440–W460, C475–L495, L517–I537, A560–M580, L581–I601, and L700–L720.

Belongs to the ABC transporter superfamily. ABCG family. Eye pigment precursor importer (TC 3.A.1.204) subfamily.

The protein resides in the membrane. The chain is ABC transporter G family member 6 (ABCG6) from Arabidopsis thaliana (Mouse-ear cress).